An 830-amino-acid chain; its full sequence is GPI ethanolamine phosphate transferase 2 (830 aa).

Residues 1–32 form the signal peptide; sequence MNLKQFTCLSCAQLLAILLFIFAFFPRKIVLT. Residues 33–321 lie on the Lumenal side of the membrane; it reads GISKQDPDQD…QYLETVQQID (289 aa). 3 N-linked (GlcNAc...) asparagine glycosylation sites follow: N145, N185, and N298. A helical membrane pass occupies residues 322–342; that stretch reads IVPTIAALFGMPIPMNSVGII. Residues 343–405 lie on the Cytoplasmic side of the membrane; it reads IPDFLQLLPN…TKSATNYNYP (63 aa). The helical transmembrane segment at 406–426 threads the bilayer; that stretch reads LLTLAFVGFLIITIIAIYVLL. Residues 427–439 lie on the Lumenal side of the membrane; the sequence is RYSGPDFWQLRVS. Residues 440–460 traverse the membrane as a helical segment; sequence SLSVLLVSIILGVSTFASSFI. The Cytoplasmic segment spans residues 461–469; it reads EEEHQLWWW. The chain crosses the membrane as a helical span at residues 470-490; the sequence is IVTAFSAVPLFVYRLNVLIIV. At 491 to 533 the chain is on the lumenal side; that stretch reads RWFIMMACVRSIKFWNNSGQKFIYSNVMSNLLNQNPSWKWCLN. An N-linked (GlcNAc...) asparagine glycan is attached at N506. The chain crosses the membrane as a helical span at residues 534–554; it reads MLTFLVLIMASAGFQVLHFIV. The Cytoplasmic segment spans residues 555–598; that stretch reads TTILVGLCFTYKISWEIVNGNQAEIPLFMHDLLAKIDFAPTESN. Residues 599–619 traverse the membrane as a helical segment; that stretch reads LIVLARVFFQAWAIVVISRLV. Topologically, residues 620-651 are lumenal; that stretch reads LTKLKVLNKNYLIKDMKVYITILLMFQTSSQN. A helical transmembrane segment spans residues 652 to 672; that stretch reads IGQFLVFQILESQIFYFFQNI. Residues 673–682 are Cytoplasmic-facing; it reads PTASLTSTSK. A helical transmembrane segment spans residues 683-703; the sequence is IYFSNLVSLILQNFTFFQFGG. Topologically, residues 704–724 are lumenal; the sequence is TNSISTIDLGNAYHGVSSDYN. Residues 725–745 form a helical membrane-spanning segment; sequence IYVVGILMSVANFAPAIYWSM. At 746–768 the chain is on the cytoplasmic side; it reads LPWSINYASIPAQVKLQTFIRSK. A helical transmembrane segment spans residues 769 to 789; that stretch reads LPAFTYHCIFGTCLMTACVVL. The Lumenal portion of the chain corresponds to 790–805; sequence RFHLFIWSVFSPKLCY. The chain crosses the membrane as a helical span at residues 806 to 826; sequence FLGWNFVMGLLNGWLPELALL. At 827–830 the chain is on the cytoplasmic side; sequence CALD.

Belongs to the PIGG/PIGN/PIGO family. PIGG subfamily. N-glycosylated.

It is found in the endoplasmic reticulum membrane. It functions in the pathway glycolipid biosynthesis; glycosylphosphatidylinositol-anchor biosynthesis. Ethanolamine phosphate transferase involved in glycosylphosphatidylinositol-anchor biosynthesis. Transfers ethanolamine phosphate to the GPI second mannose. Although not essential, addition of ethanolamine phosphate to the second mannose plays an important role in cell separation via the GPI-based modification of daughter-specific proteins. The chain is GPI ethanolamine phosphate transferase 2 (LAS21) from Saccharomyces cerevisiae (strain ATCC 204508 / S288c) (Baker's yeast).